The sequence spans 134 residues: Profilin-3 (134 aa).

A disulfide bond links cysteine 13 and cysteine 118. Positions 84–100 (AVIRGKKGSGGITIKKT) match the Involved in PIP2 interaction motif. At threonine 114 the chain carries Phosphothreonine.

Belongs to the profilin family. Occurs in many kinds of cells as a complex with monomeric actin in a 1:1 ratio. Phosphorylated by MAP kinases.

The protein resides in the cytoplasm. Its subcellular location is the cytoskeleton. Its function is as follows. Binds to actin and affects the structure of the cytoskeleton. At high concentrations, profilin prevents the polymerization of actin, whereas it enhances it at low concentrations. This is Profilin-3 from Olea europaea (Common olive).